Here is a 2885-residue protein sequence, read N- to C-terminus: Chromodomain-helicase-DNA-binding protein 9 (2885 aa).

A disordered region spans residues Gln173–Gln195. Lys197 is covalently cross-linked (Glycyl lysine isopeptide (Lys-Gly) (interchain with G-Cter in SUMO2)). 3 disordered regions span residues Cys242–Ser263, Ser283–Tyr347, and Cys479–Gln677. Polar residues-rich tracts occupy residues Ser243 to Ser263 and Ser283 to Ser310. The span at Leu323 to Asn334 shows a compositional bias: low complexity. 2 stretches are compositionally biased toward polar residues: residues Phe335–Tyr347 and Gln483–Arg505. N6-acetyllysine is present on Lys498. 2 stretches are compositionally biased toward basic and acidic residues: residues Met507–Asn526 and Ala534–Ile544. Ser549 is subject to Phosphoserine. Over residues Lys572–Lys592 the composition is skewed to basic and acidic residues. Residue Lys595 forms a Glycyl lysine isopeptide (Lys-Gly) (interchain with G-Cter in SUMO2) linkage. Position 610 is a phosphoserine (Ser610). Over residues Ala617–Ser630 the composition is skewed to basic and acidic residues. The segment covering Gln631 to Lys643 has biased composition (basic residues). Residues Tyr644–Gly659 show a composition bias toward basic and acidic residues. Chromo domains lie at Ala689 to Ala760 and Val772 to Arg838. The LXXLL motif 1 motif lies at Leu867–Leu871. The region spanning Leu871–Leu1045 is the Helicase ATP-binding domain. Asp884 to Thr891 is a binding site for ATP. The DEAH box signature appears at Asp996 to His999. The LXXLL motif 2 signature appears at Leu1035–Leu1039. The region spanning Leu1185 to Arg1336 is the Helicase C-terminal domain. Residues Lys1460–Asp1484 form a disordered region. Acidic residues predominate over residues Ala1464–Gly1473. Phosphoserine occurs at positions 1467 and 1471. Residues Glu1474–Asp1484 are compositionally biased toward basic and acidic residues. Glycyl lysine isopeptide (Lys-Gly) (interchain with G-Cter in SUMO2) cross-links involve residues Lys1587, Lys1737, and Lys1902. Ser2025 is modified (phosphoserine). Positions Leu2030–Leu2034 match the LXXLL motif 3 motif. Residue Lys2037 forms a Glycyl lysine isopeptide (Lys-Gly) (interchain with G-Cter in SUMO2) linkage. The interval Val2046–Gly2238 is disordered. Residues Ser2057 and Ser2058 each carry the phosphoserine modification. Residue Lys2073 forms a Glycyl lysine isopeptide (Lys-Gly) (interchain with G-Cter in SUMO2) linkage. Residues Ser2074 and Ser2078 each carry the phosphoserine modification. Residues Val2083–Lys2092 are compositionally biased toward polar residues. Positions Ser2093–Met2103 are enriched in basic and acidic residues. The span at Ser2127–Ser2193 shows a compositional bias: low complexity. Residues Asp2201–Asp2215 show a composition bias toward basic and acidic residues. Residues Ala2220–Gly2238 are compositionally biased toward polar residues. The interval Gln2331 to Pro2471 is binds A/T-rich DNA. Residues Lys2349, Lys2355, and Lys2360 each participate in a glycyl lysine isopeptide (Lys-Gly) (interchain with G-Cter in SUMO2) cross-link. Residues Lys2428 to Arg2435 are a.T hook-like. The disordered stretch occupies residues Thr2473–Pro2494. Residues Asp2484–Pro2494 show a composition bias toward basic and acidic residues. An LXXLL motif 4 motif is present at residues Leu2710–Leu2714. The tract at residues Ala2724 to Ala2770 is disordered. Residues Ala2728–Glu2747 show a composition bias toward basic and acidic residues. Residues Leu2782–Leu2786 carry the LXXLL motif 5 motif. Residues Lys2818–Gly2847 are compositionally biased toward basic and acidic residues. The tract at residues Lys2818–Asp2885 is disordered. A Glycyl lysine isopeptide (Lys-Gly) (interchain with G-Cter in SUMO2) cross-link involves residue Lys2833. Positions Arg2864–Ser2876 are enriched in low complexity.

This sequence belongs to the SNF2/RAD54 helicase family. In terms of assembly, interacts with PPARA. Probably interacts with ESR1 and NR1I3. In terms of processing, phosphorylated on serine and tyrosine residues. Expressed in osteoprogenitor cells during development and in mature bone (at protein level).

Its subcellular location is the cytoplasm. It is found in the nucleus. It carries out the reaction ATP + H2O = ADP + phosphate + H(+). Its function is as follows. Probable ATP-dependent chromatin-remodeling factor. Acts as a transcriptional coactivator for PPARA and possibly other nuclear receptors. Has DNA-dependent ATPase activity and binds to A/T-rich DNA. Associates with A/T-rich regulatory regions in promoters of genes that participate in the differentiation of progenitors during osteogenesis. The chain is Chromodomain-helicase-DNA-binding protein 9 (Chd9) from Mus musculus (Mouse).